The sequence spans 479 residues: MAISCAVGMEMQEPKMNGTLSAGAAAGYRQEREGFLPTTRNPATGRKPVQFLDFEGKTSFGMSVFNLSNAIMGSGILGLAYAMAHTGVIFFLALLLCIALLSSYSIHLLLTCASVVGIRAYEQLGQRAFGPAGKVVVAIIICLHNVGAMSSYLFIIKSELPLVIGTFLHMDPEGDWFLKGNLLIILVSLLIILPLALMKHLGYLGYTSSLSLTCMLFFLISVIYKKFQIGCDVSHNDTVVEAEQAPLQAFNSSCEAELFTVDSQMSYTVPIMAFAFVCHPEVLPIYTELCRPTQRRMQAVANMSIGAMFIMYGLTATFGYLTFYSTVKAEMLEMYTQEDMLILCVRLAVLLAVTLTVPVVLFPIRRALQQLLFPSKAFSWLRHVAIALILLILVNILVICVPTIRDIFGFIGSTSAPSLIFILPSVFYLRIVPTEVEPLFSWPKIQALCFGVLGVLFMAISLGFMFANWATGQSRMSGH.

Residues M1–G61 lie on the Cytoplasmic side of the membrane. Residues M62–A84 form a helical membrane-spanning segment. Topologically, residues H85–C97 are extracellular. A helical transmembrane segment spans residues I98 to I118. Residues R119–V135 lie on the Cytoplasmic side of the membrane. The helical transmembrane segment at V136–I156 threads the bilayer. The Extracellular segment spans residues K157–W176. Residues F177–L197 form a helical membrane-spanning segment. Over M198–G202 the chain is Cytoplasmic. The chain crosses the membrane as a helical span at residues Y203–I223. Residues Y224 to Q264 lie on the Extracellular side of the membrane. C231 and C254 are disulfide-bonded. N236 carries N-linked (GlcNAc...) asparagine glycosylation. The chain crosses the membrane as a helical span at residues M265–I285. Topologically, residues Y286 to N302 are cytoplasmic. Residues M303–F323 traverse the membrane as a helical segment. Residues Y324–L341 are Extracellular-facing. Residues I342–F362 traverse the membrane as a helical segment. Topologically, residues P363–H383 are cytoplasmic. A helical transmembrane segment spans residues V384–I404. Topologically, residues R405–D406 are extracellular. Residues I407 to F427 form a helical membrane-spanning segment. At Y428–Q446 the chain is on the cytoplasmic side. A helical membrane pass occupies residues A447–A467. At N468–H479 the chain is on the extracellular side.

This sequence belongs to the amino acid/polyamine transporter 2 family. In terms of tissue distribution, expressed in the ganglion cell layer and the nerve fiber layer (at protein level). Also expreseed in the cells of the inner nuclear layer and in the inner plexiform layer (at protein level). Expressed in Mueller and ganglion retinal cell.

Its subcellular location is the cell membrane. The enzyme catalyses L-glutamine(out) + Na(+)(out) + H(+)(in) = L-glutamine(in) + Na(+)(in) + H(+)(out). It catalyses the reaction L-serine(out) + Na(+)(out) + H(+)(in) = L-serine(in) + Na(+)(in) + H(+)(out). It carries out the reaction L-alanine(out) + Na(+)(out) + H(+)(in) = L-alanine(in) + Na(+)(in) + H(+)(out). The catalysed reaction is glycine(out) + Na(+)(out) + H(+)(in) = glycine(in) + Na(+)(in) + H(+)(out). The enzyme catalyses L-asparagine(out) + Na(+)(out) + H(+)(in) = L-asparagine(in) + Na(+)(in) + H(+)(out). It catalyses the reaction L-histidine(out) + Na(+)(out) + H(+)(in) = L-histidine(in) + Na(+)(in) + H(+)(out). It carries out the reaction L-cysteine(out) + Na(+)(out) + H(+)(in) = L-cysteine(in) + Na(+)(in) + H(+)(out). Not inhibited by lithium. Partial allosteric regulation on ions sodium binding. Its function is as follows. Symporter that cotransports neutral amino acids and sodium ions, coupled to an H(+) antiporter activity. Releases L-glutamine and glycine from astroglial cells and may participate in the glutamate/GABA-L-glutamine cycle and the NMDA receptors activation. In addition, contributes significantly to L-glutamine uptake in retina, namely in ganglion and Mueller cells therefore, participates in the retinal glutamate-glutamine cycle. The transport activity is pH sensitive, Li(+) tolerant, bidirectional and associated with large uncoupled fluxes of protons. Moreover functions in both direction and is associated with large uncoupled fluxes of protons. The transport is electroneutral coupled to the cotransport of 1 Na(+) and the antiport of 1 H(+). May have a particular importance for modulation of net hepatic glutamine flux. The polypeptide is Sodium-coupled neutral amino acid transporter 5 (Mus musculus (Mouse)).